The following is a 222-amino-acid chain: Transmembrane protein 54 (222 aa).

Transmembrane regions (helical) follow at residues 22–42 (LVLV…HGTV), 62–82 (ILSV…IVLS), 100–120 (ACAL…AMTF), and 155–175 (SSLC…VFAV).

The protein belongs to the TMEM54 family. In terms of tissue distribution, ubiquitously expressed in cancer cell lines.

It localises to the membrane. The polypeptide is Transmembrane protein 54 (TMEM54) (Homo sapiens (Human)).